A 616-amino-acid polypeptide reads, in one-letter code: Chaperone protein DnaK (616 aa).

Phosphothreonine; by autocatalysis is present on threonine 174. The disordered stretch occupies residues 576–616 (QASAPGAGPEGASGGFGGENKKDDNVVDADYTVIDDDKKKT). Positions 583 to 593 (GPEGASGGFGG) are enriched in gly residues.

This sequence belongs to the heat shock protein 70 family.

Its function is as follows. Acts as a chaperone. This is Chaperone protein DnaK from Heliobacterium modesticaldum (strain ATCC 51547 / Ice1).